Reading from the N-terminus, the 918-residue chain is Glutamate receptor ionotropic, kainate 1 (918 aa).

Positions 1-30 (MEHGTLLAQPGLWTRDTSWALLYFLCYILP) are cleaved as a signal peptide. The Extracellular portion of the chain corresponds to 31-576 (QTAPQVLRIG…VFSFLNPLSP (546 aa)). 7 N-linked (GlcNAc...) asparagine glycosylation sites follow: N68, N74, N276, N379, N428, N439, and N446. L-glutamate is bound by residues P531, T533, and R538. An N-linked (GlcNAc...) asparagine glycan is attached at N561. A helical membrane pass occupies residues 577–597 (DIWMYVLLACLGVSCVLFVIA). Residues 598 to 653 (RFTPYEWYNPHPCNPDSDVVENNFTLLNSFWFGVGALMQQGSELMPKALSTRIVGG) are Cytoplasmic-facing. A helical transmembrane segment spans residues 654–674 (IWWFFTLIIISSYTANLAAFL). Topologically, residues 675-834 (TVERMESPID…KEASALGVEN (160 aa)) are extracellular. Residues S704 and T705 each contribute to the L-glutamate site. S725 carries the phosphoserine; by PKC modification. E753 is an L-glutamate binding site. T761 is subject to Phosphothreonine; by PKC. Cysteines 765 and 819 form a disulfide. The N-linked (GlcNAc...) asparagine glycan is linked to N766. The helical transmembrane segment at 835–855 (IGGIFIVLAAGLVLSVFVAIG) threads the bilayer. The Cytoplasmic segment spans residues 856 to 918 (EFIYKSRKNN…IRKQSSVHTV (63 aa)).

Belongs to the glutamate-gated ion channel (TC 1.A.10.1) family. GRIK1 subfamily. As to quaternary structure, homotetramer or heterotetramer of pore-forming glutamate receptor subunits. Tetramers may be formed by the dimerization of dimers. Can form functional heteromeric receptors with GRIK5. Can form functional heteromeric receptors with GRIK4. Interacts with KLHL17.

It is found in the cell membrane. The protein localises to the postsynaptic cell membrane. The enzyme catalyses Ca(2+)(in) = Ca(2+)(out). In terms of biological role, ionotropic glutamate receptor that functions as a cation-permeable ligand-gated ion channel, gated by L-glutamate and the glutamatergic agonist kainic acid. L-glutamate acts as an excitatory neurotransmitter at many synapses in the central nervous system. Binding of the excitatory neurotransmitter L-glutamate induces a conformation change, leading to the opening of the cation channel, and thereby converts the chemical signal to an electrical impulse. The receptor then desensitizes rapidly and enters a transient inactive state, characterized by the presence of bound agonist. Its function is as follows. Ionotropic glutamate receptor that functions as a cation-permeable ligand-gated ion channel, gated by L-glutamate and the glutamatergic agonist kainic acid. In Homo sapiens (Human), this protein is Glutamate receptor ionotropic, kainate 1 (GRIK1).